We begin with the raw amino-acid sequence, 199 residues long: Chaperone protein TorD (199 aa).

This sequence belongs to the TorD/DmsD family. TorD subfamily.

It is found in the cytoplasm. Its function is as follows. Involved in the biogenesis of TorA. Acts on TorA before the insertion of the molybdenum cofactor and, as a result, probably favors a conformation of the apoenzyme that is competent for acquiring the cofactor. This is Chaperone protein TorD from Escherichia coli O81 (strain ED1a).